The following is a 485-amino-acid chain: 3-isopropylmalate dehydratase large subunit (485 aa).

[4Fe-4S] cluster contacts are provided by Cys-367, Cys-427, and Cys-430. The span at 439–451 shows a compositional bias: polar residues; sequence SPGQRAASTSNRN. Residues 439–462 form a disordered region; sequence SPGQRAASTSNRNFEGRQGKGGRT.

It belongs to the aconitase/IPM isomerase family. LeuC type 1 subfamily. Heterodimer of LeuC and LeuD. It depends on [4Fe-4S] cluster as a cofactor.

The enzyme catalyses (2R,3S)-3-isopropylmalate = (2S)-2-isopropylmalate. Its pathway is amino-acid biosynthesis; L-leucine biosynthesis; L-leucine from 3-methyl-2-oxobutanoate: step 2/4. Its function is as follows. Catalyzes the isomerization between 2-isopropylmalate and 3-isopropylmalate, via the formation of 2-isopropylmaleate. The chain is 3-isopropylmalate dehydratase large subunit from Actinoplanes teichomyceticus.